Reading from the N-terminus, the 426-residue chain is Selenocysteine lyase (426 aa).

Lys-239 carries the post-translational modification N6-(pyridoxal phosphate)lysine. Residue Cys-367 is the S-selanylcysteine intermediate of the active site.

This sequence belongs to the class-V pyridoxal-phosphate-dependent aminotransferase family. In terms of assembly, homodimer. The cofactor is pyridoxal 5'-phosphate.

The protein resides in the cytoplasm. It is found in the cytosol. The catalysed reaction is L-selenocysteine + AH2 = hydrogenselenide + L-alanine + A + H(+). Its function is as follows. Catalyzes the decomposition of L-selenocysteine to L-alanine and elemental selenium. The chain is Selenocysteine lyase (scly) from Xenopus laevis (African clawed frog).